Consider the following 625-residue polypeptide: MEGLDEKKPWGKLSRLLGAETDSSSELFLYKKEWTIGRKKACDLSFPGNKLVSGEHCKITVNEESGEVSLEDTSTNGTVINKLKVIRKQTYPLKNGDVIYVVYRKNEPEQNVAYLYKSLNQGQDSLHDPADTSGSEEAETQTLSSQDDQLSYEEPQPSTSTSSLFSTPTTSAIPGVQLESAEKSGESLGGHSSTSDASPAIRASIPKSNLSTQEQGSLGPPKKRIRTEDHWTTNKNFVPASCPIGASDESKTPSMKPDKMEETLTCIICQELLHDCVSLQPCMHTFCAACYSGWMERSSLCPTCRCPVERICKNHILNNLVEAYLIQHPEKCRSEEDRCSMDARNKITQDMLQPKVRRSFSDEEGSSEDLLELSDVDSESSDISQPYTVCRQCPGFVRHSMQPPPYPPPSDTETSRTQGDAPSTSTNFPTATQEYVCPSHGSHVICTCCFQPMPDRRAEREHNSHVAPQQCTICLEPFCHMYWGCNRMGCFGCLAPFCELNLGDKCLDGVLNNNNYESDILKNYLASRGLTWKDMLNESLAAVQRGVFMLPDYRINGTTVLCYFCGLRNFRILTYQYRQNIPASELPVTVTSRPNCYWGRNCRTQVKAHHAMKFNHICEQTRFKN.

Residues 34–85 form the FHA domain; that stretch reads WTIGRKKACDLSFPGNKLVSGEHCKITVNEESGEVSLEDTSTNGTVINKLKV. Disordered regions lie at residues 123 to 171 and 205 to 229; these read QDSL…PTTS and IPKS…RTED. Residues 140–149 show a composition bias toward polar residues; that stretch reads TQTLSSQDDQ. Residues 158–171 show a composition bias toward low complexity; it reads STSTSSLFSTPTTS. The segment covering 206-216 has biased composition (polar residues); it reads PKSNLSTQEQG. The RING-type zinc-finger motif lies at 266-305; the sequence is CIICQELLHDCVSLQPCMHTFCAACYSGWMERSSLCPTCR. 2 disordered regions span residues 350–386 and 401–427; these read DMLQ…ISQP and MQPP…TSTN. Positions 362-380 are enriched in acidic residues; it reads DEEGSSEDLLELSDVDSES. Positions 411–427 are enriched in polar residues; it reads DTETSRTQGDAPSTSTN. The PBZ-type zinc finger occupies 594 to 616; that stretch reads PNCYWGRNCRTQVKAHHAMKFNH.

Belongs to the CHFR family.

The protein localises to the nucleus. The protein resides in the PML body. The enzyme catalyses S-ubiquitinyl-[E2 ubiquitin-conjugating enzyme]-L-cysteine + [acceptor protein]-L-lysine = [E2 ubiquitin-conjugating enzyme]-L-cysteine + N(6)-ubiquitinyl-[acceptor protein]-L-lysine.. Its pathway is protein modification; protein ubiquitination. In terms of biological role, E3 ubiquitin-protein ligase that functions in the antephase checkpoint by actively delaying passage into mitosis in response to microtubule poisons. Acts in early prophase before chromosome condensation, when the centrosome move apart from each other along the periphery of the nucleus. Probably involved in signaling the presence of mitotic stress caused by microtubule poisons by mediating the 'Lys-48'-linked ubiquitination of target proteins, leading to their degradation by the proteasome. May also promote the formation of 'Lys-63'-linked polyubiquitin chains and functions with the specific ubiquitin-conjugating ubc13-mms2 (ube2n-ube2v2) heterodimer. Substrates that are polyubiquitinated at 'Lys-63' are usually not targeted for degradation, but are rather involved in signaling cellular stress. The polypeptide is E3 ubiquitin-protein ligase CHFR (chfr) (Xenopus laevis (African clawed frog)).